The primary structure comprises 237 residues: Cobalt-precorrin-2 C(20)-methyltransferase (237 aa).

The protein belongs to the precorrin methyltransferase family. In terms of assembly, homodimer.

The catalysed reaction is Co-precorrin-2 + S-adenosyl-L-methionine = Co-precorrin-3 + S-adenosyl-L-homocysteine + H(+). It functions in the pathway cofactor biosynthesis; adenosylcobalamin biosynthesis; cob(II)yrinate a,c-diamide from sirohydrochlorin (anaerobic route): step 2/10. Methylates cobalt-precorrin-2 at the C-20 position to produce cobalt-precorrin-3A in the anaerobic cobalamin biosynthesis pathway. The chain is Cobalt-precorrin-2 C(20)-methyltransferase (cbiL) from Salmonella typhimurium (strain LT2 / SGSC1412 / ATCC 700720).